The primary structure comprises 738 residues: MVAEEDIEKQVLQLIDSFFLKTTLLICSTESSRYQSSTENIFLFDDTWFEDHSELVSELPEIISKWSHYDGRKELPPLVVETYLDLRQLNSSHLVRLKDHEGHLWNVCKGTKKQEIVMERWLIELDNSSPTFKSYSEDETDVNELSKQLVLLFRYLLTLIQLLPTTELYQLLIKSYNGPQNEGSSNPITSTGPLVSIRTCVLDGSKPILSKGRIGLSKPIINTYSNALNESNLPAHLDQKKITPVWTKFGLLRVSVSYRRDWKFEINNTNDELFSARHASVSHNSQGPQNQPEQEGQSDQDIGKRQPQFQQQQQPQQQQQQQQQQQRQHQVQTQQQRQIPDRRSLSLSPCTRANSFEPQSWQKKVYPISRPVQPFKVGSIGSQSASRNPSNSSFFNQPPVHRPSMSSNYGPQMNIEGTSVGSTSKYSSSFGNIRRHSSVKTTENAEKVSKAVKSPLQPQESQEDLMDFVKLLEEKPDLTIKKTSGNNPPNINISDSLIRYQNLKPSNDLLSEDLSVSLSMDPNHTYHRGRSDSHSPLPSISPSMHYGSLNSRMSQGANASHLIARGGGNSSTSALNSRRNSLDKSSNKQGMSGLPPIFGGESTSYHHDNKIQKYNQLGVEEDDDDENDRLLNQMGNSATKFKSSISPRSIDSISSSFIKSRIPIRQPYHYSQPTTAPFQAQAKFHKPANKLIDNGNRSNSNNNNHNGNDAVGVMHNDEDDQDDDLVFFMSDMNLSKEG.

Disordered regions lie at residues 279 to 359 (ASVS…FEPQ) and 377 to 462 (VGSI…QESQ). Composition is skewed to low complexity over residues 284 to 297 (NSQGPQNQPEQEGQ) and 306 to 338 (QPQFQQQQQPQQQQQQQQQQQRQHQVQTQQQRQ). Ser-344 is modified (phosphoserine; by PKA). The segment covering 345-359 (LSLSPCTRANSFEPQ) has biased composition (polar residues). Position 348 is a phosphoserine; by TORC1 (Ser-348). Position 355 is a phosphoserine (Ser-355). 2 stretches are compositionally biased toward low complexity: residues 382-399 (SQSASRNPSNSSFFNQPP) and 417-429 (GTSVGSTSKYSSS). The segment at 432–520 (NIRRHSSVKT…SEDLSVSLSM (89 aa)) is interaction with ATG1. Ser-437 is subject to Phosphoserine; by TORC1 and PKA. Residue Ser-438 is modified to Phosphoserine; by TORC1. At Ser-461 the chain carries Phosphoserine. Phosphoserine; by TORC1 is present on residues Ser-496, Ser-535, and Ser-541. A disordered region spans residues 521-599 (DPNHTYHRGR…GMSGLPPIFG (79 aa)). Polar residues-rich tracts occupy residues 534–558 (HSPLPSISPSMHYGSLNSRMSQGAN) and 570–579 (SSTSALNSRR). A Phosphoserine modification is found at Ser-554. Ser-581 carries the post-translational modification Phosphoserine; by PKA. Ser-646 and Ser-649 each carry phosphoserine; by TORC1. Residues 690-719 (KLIDNGNRSNSNNNNHNGNDAVGVMHNDED) form a disordered region. Residues 694–708 (NGNRSNSNNNNHNGN) show a composition bias toward low complexity.

The protein belongs to the ATG13 family. Fungi subfamily. In terms of assembly, hypophosphorylated form interacts with ATG1 to form the ATG1-ATG13 kinase complex. The ATG1-ATG13 complex interacts with the ATG17-ATG29-ATG31 complex through direct interaction with ATG17. The ATG17-ATG29-ATG31 and ATG1-ATG13 supercomplex interacts with the PP2C phosphatases PTC2 and PTC3; to regulate induction of autophagy. Interacts with VAC8 and forms heterotetramers of two VAC8 and two ATG13. Phosphorylated; hyperphosphorylated by the TORC1 kinase complex to repress the induction of autophagy in nutrient-replete conditions. Starvation and TOR inactivation results in ATG13 partial dephosphorylation leading to ATG1-binding. Rephosphorylated by ATG1 during prolonged nitrogen starvation. Also phosphorylated by PKA. PKA phosphorylation regulates the association of ATG13 with the PAS. Within this regulatory network, mitochondrial respiratory deficiency suppresses autophagic flux. Hyperphosphorylation in rich medium is impaired in the absence of VAC8. Dephosphorylation is dependent on FAR11.

The protein localises to the cytoplasm. Its subcellular location is the preautophagosomal structure. In terms of biological role, activates the ATG1 kinase in a nutritional condition dependent manner through the TOR pathway, leading to autophagy. Required for autophosphorylation of ATG1 at 'Thr-226' and its dimerization. May also be involved in the regulation of autophagy through SNF1. Involved in ATG9 and ATG23 cycling through the pre-autophagosomal structure. Also involved in cytoplasm to vacuole transport (Cvt) and more specifically in Cvt vesicle formation. Seems to play a role in the switching machinery regulating the conversion between the Cvt pathway and autophagy. Finally, ATG13 is also required for glycogen storage during stationary phase. The sequence is that of Autophagy-related protein 13 (ATG13) from Saccharomyces cerevisiae (strain ATCC 204508 / S288c) (Baker's yeast).